Here is a 176-residue protein sequence, read N- to C-terminus: ATP synthase subunit b (176 aa).

The helical transmembrane segment at 24 to 43 (FAFRVVNFVIFAGIIWKAAG) threads the bilayer.

The protein belongs to the ATPase B chain family. In terms of assembly, F-type ATPases have 2 components, F(1) - the catalytic core - and F(0) - the membrane proton channel. F(1) has five subunits: alpha(3), beta(3), gamma(1), delta(1), epsilon(1). F(0) has three main subunits: a(1), b(2) and c(10-14). The alpha and beta chains form an alternating ring which encloses part of the gamma chain. F(1) is attached to F(0) by a central stalk formed by the gamma and epsilon chains, while a peripheral stalk is formed by the delta and b chains.

Its subcellular location is the cell inner membrane. In terms of biological role, f(1)F(0) ATP synthase produces ATP from ADP in the presence of a proton or sodium gradient. F-type ATPases consist of two structural domains, F(1) containing the extramembraneous catalytic core and F(0) containing the membrane proton channel, linked together by a central stalk and a peripheral stalk. During catalysis, ATP synthesis in the catalytic domain of F(1) is coupled via a rotary mechanism of the central stalk subunits to proton translocation. Component of the F(0) channel, it forms part of the peripheral stalk, linking F(1) to F(0). The sequence is that of ATP synthase subunit b from Nitratidesulfovibrio vulgaris (strain ATCC 29579 / DSM 644 / CCUG 34227 / NCIMB 8303 / VKM B-1760 / Hildenborough) (Desulfovibrio vulgaris).